Reading from the N-terminus, the 248-residue chain is ATP synthase subunit a, chloroplastic (248 aa).

The next 5 membrane-spanning stretches (helical) occupy residues 35–55, 94–114, 133–153, 202–222, and 224–244; these read GQVF…SFLG, VPYI…GALI, INTT…AGLS, VFTL…GLFA, and SIQA…AMEG.

The protein belongs to the ATPase A chain family. F-type ATPases have 2 components, CF(1) - the catalytic core - and CF(0) - the membrane proton channel. CF(1) has five subunits: alpha(3), beta(3), gamma(1), delta(1), epsilon(1). CF(0) has four main subunits: a, b, b' and c.

The protein resides in the plastid. Its subcellular location is the chloroplast thylakoid membrane. Its function is as follows. Key component of the proton channel; it plays a direct role in the translocation of protons across the membrane. The protein is ATP synthase subunit a, chloroplastic of Porphyra purpurea (Red seaweed).